The following is a 223-amino-acid chain: Rho-related protein racE (223 aa).

18-25 (GDGAVGKT) lines the GTP pocket. Residues 40–48 (YVPTVFENY) carry the Effector region motif. GTP contacts are provided by residues 65 to 69 (DTAGQ) and 123 to 126 (TKID). The tract at residues 187–223 (GMDKKSQDGSSSASGVPSGDKPTKGKAGKKKSGCIIL) is disordered. Residues 210–223 (KGKAGKKKSGCIIL) are compositionally biased toward basic residues. Cys220 carries the cysteine methyl ester modification. Residue Cys220 is the site of S-geranylgeranyl cysteine attachment. Positions 221–223 (IIL) are cleaved as a propeptide — removed in mature form.

Belongs to the small GTPase superfamily. Rho family. As to quaternary structure, interacts with rgaA.

The protein resides in the cell membrane. Its function is as follows. Specifically required for cytokinesis. In Dictyostelium discoideum (Social amoeba), this protein is Rho-related protein racE (racE).